Reading from the N-terminus, the 968-residue chain is Insulin receptor substrate 1 (968 aa).

Positions 8–109 constitute a PH domain; it reads GMALSGYLKK…WLDKLLVLQR (102 aa). Residues 122 to 236 form the IRS-type PTB domain; sequence YDHVWQVVIQ…SAMSAKTESN (115 aa). The disordered stretch occupies residues 248–269; sequence DLSHEPMRKRSSSANEASKPIN. A phosphoserine mark is found at S286 and S287. Over residues 304 to 329 the composition is skewed to polar residues; it reads RNGTLSESSNQTYFGSNHGLRSNTIS. Residues 304-370 form a disordered region; sequence RNGTLSESSN…VDESDDNGSF (67 aa). Residue S342 is modified to Phosphoserine. Y411 carries the post-translational modification Phosphotyrosine; by INSR. The YXXM motif 1 motif lies at 411–414; that stretch reads YIPM. A disordered region spans residues 528–555; the sequence is TANRSQSSITKEGTSYGSSANRQKKSTS. Residues 529 to 555 are compositionally biased toward polar residues; that stretch reads ANRSQSSITKEGTSYGSSANRQKKSTS. Phosphoserine is present on S555. The YXXM motif 2 motif lies at 641–644; it reads YLEM. Positions 697-711 are enriched in basic and acidic residues; it reads EKWREQPSRSEEKKS. Positions 697-739 are disordered; it reads EKWREQPSRSEEKKSNSPLNDNTFSSKPTNVESTSKSHDVHSA. Residues 712–730 show a composition bias toward polar residues; it reads NSPLNDNTFSSKPTNVEST. The residue at position 911 (Y911) is a Phosphotyrosine; by INSR. Residues 922 to 968 are disordered; the sequence is QNPAKYLKRGSRESPPVSACPEDGNTYAKIDFDQSDSSSSSSNIFNT. Residues S932 and S935 each carry the phosphoserine modification. Y948 carries the phosphotyrosine; by INSR modification. A compositionally biased stretch (low complexity) spans 956 to 968; it reads SDSSSSSSNIFNT.

As to quaternary structure, bindings to phosphatidylinositol 3-kinase and SHP2.

In terms of biological role, activates phosphatidylinositol 3-kinase when bound to the regulatory p85 subunit. May mediate the control of various cellular processes by insulin-like peptides. When phosphorylated by the insulin receptor binds specifically to various cellular proteins containing SH2 domains. Involved in control of cell proliferation, cell size, and body and organ growth throughout development. Also has a role in a signaling pathway controlling the physiological response required to endure periods of low nutrient conditions. Insulin/insulin-like growth factor (IGF) signaling pathway has a role in regulating aging and is necessary in the ovary for vitellogenic maturation. In Drosophila melanogaster (Fruit fly), this protein is Insulin receptor substrate 1 (chico).